We begin with the raw amino-acid sequence, 279 residues long: Eukaryotic translation initiation factor 3 subunit G (279 aa).

3 disordered regions span residues 1-26 (MSTGLLDSWADAGDEFSAPPEVIANP), 66-115 (RKNW…KAHE), and 152-171 (TPSGTTPEPTSEGGAGAAGA). A Phosphoserine modification is found at Ser78. The segment covering 102–115 (KQDEKKEEEDKAHE) has biased composition (basic and acidic residues). Positions 152–163 (TPSGTTPEPTSE) are enriched in low complexity. One can recognise an RRM domain in the interval 197-276 (TTLKVSQLNS…LILHLEWSKK (80 aa)).

It belongs to the eIF-3 subunit G family. In terms of assembly, component of the eukaryotic translation initiation factor 3 (eIF-3) complex.

Its subcellular location is the cytoplasm. Functionally, RNA-binding component of the eukaryotic translation initiation factor 3 (eIF-3) complex, which is involved in protein synthesis of a specialized repertoire of mRNAs and, together with other initiation factors, stimulates binding of mRNA and methionyl-tRNAi to the 40S ribosome. The eIF-3 complex specifically targets and initiates translation of a subset of mRNAs involved in cell proliferation. This subunit can bind 18S rRNA. This chain is Eukaryotic translation initiation factor 3 subunit G, found in Candida albicans (strain SC5314 / ATCC MYA-2876) (Yeast).